We begin with the raw amino-acid sequence, 637 residues long: MDTTNNTYARSISSNGNDNFPTPDWQFNGSQLQQNRKSKMNGRSVTNVFPNAFSDAEFEQISMPELNLKRFNPTTLEENNSDLSDMSSWDYMMNVPIRVYNDADTMDPFSLDTIPDSSMDMPFDPLASDYGNAANFPSVPSSLGSNHQFITTPPVNGSNEPTSAQTNHIITANSSPSGNAGSNASASMSVPPPLTPSASTINDQPFSNSFDLPSQVIADGTGAISDINGNPFPMNSPPLDMEPLPSISMDASDSVSEQLVKDASLPSGPFSTDYLENGSDLKRSLGHNQKSDRVSKDVSPQHQANPSTLNNPLKTQNFDSSKNLYTDNKDSSLVSPTGLQSRMEQNPEVRAHPMKDSATSTALRRSHALGAAADSLLPQENSAQIYDGKDVSMVNDNMHSDVRQDSFNKESIKQRIPSLSPPITRSYNAKHRPSLVLGTSVNPHSLSPSQPPVVVPSNTTISSSPPLTSPVKTSANIPNLLPTSELDSSNAPHSQSAATHDLNDVKSYYNTRSSHSVVPNPTNQKVSITGAAADGPNGSAPVDTTPTNSSTTATGAQRKRRKFKFGKQIGPVRCTLQNRVTGEICNTVFSRTYDLIRHQDTIHAKTRPVFRCEICGDQRHFSRHDALVRHLRVKHGR.

Disordered regions lie at residues 1-41, 145-164, 169-207, 221-363, 404-427, and 440-558; these read MDTT…SKMN, SNHQ…PTSA, IITA…QPFS, TGAI…STAL, QDSF…TRSY, and SVNP…GAQR. Over residues 172–189 the composition is skewed to low complexity; it reads ANSSPSGNAGSNASASMS. Residues 196 to 207 are compositionally biased toward polar residues; the sequence is PSASTINDQPFS. The segment covering 279–296 has biased composition (basic and acidic residues); sequence SDLKRSLGHNQKSDRVSK. Residues 298–344 show a composition bias toward polar residues; the sequence is VSPQHQANPSTLNNPLKTQNFDSSKNLYTDNKDSSLVSPTGLQSRME. Composition is skewed to basic and acidic residues over residues 345-355 and 404-413; these read QNPEVRAHPMK and QDSFNKESIK. Positions 455-471 are enriched in low complexity; that stretch reads VPSNTTISSSPPLTSPV. 2 stretches are compositionally biased toward polar residues: residues 472–498 and 508–527; these read KTSA…QSAA and YYNT…QKVS. Residues 544 to 554 are compositionally biased toward low complexity; sequence TTPTNSSTTAT. The segment at 572–603 adopts a C2H2-type 1 zinc-finger fold; sequence VRCTLQNRVTGEICNTVFSRTYDLIRHQDTIH. The C2H2-type 2; degenerate zinc finger occupies 610–635; the sequence is FRCEICGDQRHFSRHDALVRHLRVKH.

The protein localises to the nucleus. The protein is Zinc finger protein rsv2 (rsv2) of Schizosaccharomyces pombe (strain 972 / ATCC 24843) (Fission yeast).